Here is a 227-residue protein sequence, read N- to C-terminus: PKHD-type hydroxylase Bxeno_B2756 (227 aa).

In terms of domain architecture, Fe2OG dioxygenase spans 80–179 (QVYPPLFNRY…RVASFFWVQS (100 aa)). Positions 98, 100, and 160 each coordinate Fe cation. Arginine 170 lines the 2-oxoglutarate pocket.

Fe(2+) serves as cofactor. It depends on L-ascorbate as a cofactor.

The sequence is that of PKHD-type hydroxylase Bxeno_B2756 from Paraburkholderia xenovorans (strain LB400).